Here is a 407-residue protein sequence, read N- to C-terminus: Phosphonoacetate hydrolase (407 aa).

7 residues coordinate Zn(2+): Asp25, Thr64, Asp202, His206, Asp241, His242, and His368. Residues Thr64 and Asp202 each coordinate substrate. Substrate contacts are provided by His242 and His368.

The protein belongs to the alkaline phosphatase family. PhnA subfamily. Homodimer. Zn(2+) serves as cofactor.

The catalysed reaction is phosphonoacetate + H2O = acetate + phosphate + H(+). With respect to regulation, completely inhibited by EDTA and 1,10-phenanthroline. Moderately inhibited by the phosphonocarboxylic acids phosphonoformate and 3-phosphonopropionate and the phosphonate herbicide glyphosate. Partially inhibited by the reducing agents sodium sulfide and dithiotheitol and the chelating agent iminodiacetate. Nonphosphonate analogs of phosphonoacetate, such as arsonoacetate, sulfonoacetate and malonate are poor inhibitors. Inorganic phosphate, acetate and the known phosphonotase inhibitor phosphite have little effect on activity. Not inhibited by the alkylphosphonic acids methylphosphonate and ethylphosphonate, or the aminoalkylphosphonates 2-aminoethylphosphonate, 3-aminopropylphosphonate and 4-aminobutylphosphonate. Fe(3+), Ca(2+), Mg(2+) and Cs(+) have no effect on activity. Activity is slightly increased by the aminoalkylphosphonates 1-aminoethylphosphonate, 1-aminobutylphosphonate, 2-amino-4-butylphosphonate. Activity is increased by Zn(2+), Mn(2+) and Co(2+), these 3 metal ions also allow recovery of activity after EDTA treatment. In terms of biological role, specifically hydrolyzes phosphonoacetate. Does not have activity on other organophosphonates or acetates. This Pseudomonas fluorescens protein is Phosphonoacetate hydrolase.